The sequence spans 1835 residues: Protein TIC 214 (1835 aa).

The next 6 membrane-spanning stretches (helical) occupy residues 25 to 45 (VGLY…LFLL), 64 to 84 (FITG…HLAL), 87 to 107 (PHTI…WNNH), 124 to 144 (LSIQ…HFIL), 172 to 192 (VGWL…LFWI), and 221 to 241 (IFSI…PSPI). Residues 246–258 (LKETSETEERGES) show a composition bias toward basic and acidic residues. Disordered stretches follow at residues 246 to 304 (LKET…DGNQ), 735 to 759 (EFKT…KKEE), and 1535 to 1578 (NRNQ…KRQS). A compositionally biased stretch (acidic residues) spans 259–268 (AEETDVEIET). Residues 1553 to 1569 (PRNRQKDLEKDYAESDI) are compositionally biased toward basic and acidic residues.

Belongs to the TIC214 family. In terms of assembly, part of the Tic complex.

The protein resides in the plastid. Its subcellular location is the chloroplast inner membrane. Involved in protein precursor import into chloroplasts. May be part of an intermediate translocation complex acting as a protein-conducting channel at the inner envelope. This chain is Protein TIC 214, found in Liriodendron tulipifera (Tuliptree).